Reading from the N-terminus, the 463-residue chain is Phosphoglucosamine mutase (463 aa).

S102 (phosphoserine intermediate) is an active-site residue. Mg(2+)-binding residues include S102, D240, D242, and D244. At S102 the chain carries Phosphoserine.

The protein belongs to the phosphohexose mutase family. Requires Mg(2+) as cofactor. Activated by phosphorylation.

It carries out the reaction alpha-D-glucosamine 1-phosphate = D-glucosamine 6-phosphate. Functionally, catalyzes the conversion of glucosamine-6-phosphate to glucosamine-1-phosphate. In Mycobacterium leprae (strain Br4923), this protein is Phosphoglucosamine mutase.